The chain runs to 238 residues: Ribose-5-phosphate isomerase A (238 aa).

Substrate-binding positions include 30 to 33, 87 to 90, and 100 to 103; these read SGST, DGAD, and KGGG. Glu-109 (proton acceptor) is an active-site residue. Residue Lys-127 participates in substrate binding.

It belongs to the ribose 5-phosphate isomerase family. As to quaternary structure, homodimer.

It carries out the reaction aldehydo-D-ribose 5-phosphate = D-ribulose 5-phosphate. Its pathway is carbohydrate degradation; pentose phosphate pathway; D-ribose 5-phosphate from D-ribulose 5-phosphate (non-oxidative stage): step 1/1. Functionally, catalyzes the reversible conversion of ribose-5-phosphate to ribulose 5-phosphate. This chain is Ribose-5-phosphate isomerase A, found in Synechococcus sp. (strain CC9311).